The chain runs to 710 residues: Fatty acid oxidation complex subunit alpha (710 aa).

The interval M1–P190 is enoyl-CoA hydratase. Positions R310 to K710 are 3-hydroxyacyl-CoA dehydrogenase.

The protein in the N-terminal section; belongs to the enoyl-CoA hydratase/isomerase family. This sequence in the central section; belongs to the 3-hydroxyacyl-CoA dehydrogenase family. Heterotetramer of two alpha chains (FadJ) and two beta chains (FadI).

It localises to the cytoplasm. It catalyses the reaction a (3S)-3-hydroxyacyl-CoA = a (2E)-enoyl-CoA + H2O. The catalysed reaction is a 4-saturated-(3S)-3-hydroxyacyl-CoA = a (3E)-enoyl-CoA + H2O. The enzyme catalyses a (3S)-3-hydroxyacyl-CoA + NAD(+) = a 3-oxoacyl-CoA + NADH + H(+). It carries out the reaction (3S)-3-hydroxybutanoyl-CoA = (3R)-3-hydroxybutanoyl-CoA. It functions in the pathway lipid metabolism; fatty acid beta-oxidation. Its function is as follows. Catalyzes the formation of a hydroxyacyl-CoA by addition of water on enoyl-CoA. Also exhibits 3-hydroxyacyl-CoA epimerase and 3-hydroxyacyl-CoA dehydrogenase activities. This Shewanella frigidimarina (strain NCIMB 400) protein is Fatty acid oxidation complex subunit alpha.